Reading from the N-terminus, the 569-residue chain is 4-coumarate--CoA ligase 2 (569 aa).

Positions 219, 220, 221, 222, 223, and 227 each coordinate ATP. (E)-4-coumaroyl-AMP contacts are provided by Phe269 and Ser273. Arg290 provides a ligand contact to CoA. The tract at residues 292-361 (EMGAMLGAIE…ARLPQAIFGQ (70 aa)) is SBD1. The (E)-4-coumaroyl-AMP site is built by Ala339, Gln361, Gly362, Thr366, and Met374. The ATP site is built by Gln361, Gly362, and Thr366. The interval 362 to 429 (GYGMTEAGPV…IRGPQIMKGY (68 aa)) is SBD2. Positions 450 and 465 each coordinate ATP. Lys467 and Lys471 together coordinate (E)-4-coumaroyl-AMP. CoA is bound by residues Lys473 and Gly474. Lys556 lines the ATP pocket.

The protein belongs to the ATP-dependent AMP-binding enzyme family. Requires Mg(2+) as cofactor. As to expression, expressed in roots, stems, leaf blades, leaf sheaths and spikelets.

It catalyses the reaction (E)-ferulate + ATP + CoA = (E)-feruloyl-CoA + AMP + diphosphate. It carries out the reaction (E)-4-coumarate + ATP + CoA = (E)-4-coumaroyl-CoA + AMP + diphosphate. The catalysed reaction is (E)-caffeate + ATP + CoA = (E)-caffeoyl-CoA + AMP + diphosphate. The enzyme catalyses (E)-cinnamate + ATP + CoA = (E)-cinnamoyl-CoA + AMP + diphosphate. It catalyses the reaction (E)-ferulate + ATP + H(+) = (E)-feruloyl-AMP + diphosphate. It carries out the reaction (E)-feruloyl-AMP + CoA = (E)-feruloyl-CoA + AMP + H(+). The catalysed reaction is (E)-4-coumarate + ATP + H(+) = (E)-4-coumaroyl-AMP + diphosphate. The enzyme catalyses (E)-4-coumaroyl-AMP + CoA = (E)-4-coumaroyl-CoA + AMP + H(+). It catalyses the reaction (E)-caffeate + ATP + H(+) = (E)-caffeoyl-AMP + diphosphate. It carries out the reaction (E)-caffeoyl-AMP + CoA = (E)-caffeoyl-CoA + AMP + H(+). Its pathway is phytoalexin biosynthesis; 3,4',5-trihydroxystilbene biosynthesis; 3,4',5-trihydroxystilbene from trans-4-coumarate: step 1/2. In terms of biological role, involved in the phenylpropanoid metabolism by mediating the activation of a number of hydroxycinnamates for the biosynthesis of monolignols and other phenolic secondary metabolites. Catalyzes the formation of CoA esters of cinnamate, 4-coumarate, caffeate and ferulate. Is more efficient with substrates in the following order: ferulate &gt; 4-coumarate &gt; caffeate &gt; cinnamate. Cannot convert sinapate to its corresponding CoA ester. Follows a two-step reaction mechanism, wherein the carboxylate substrate first undergoes adenylation by ATP, followed by a thioesterification in the presence of CoA to yield the final CoA thioester. The chain is 4-coumarate--CoA ligase 2 from Oryza sativa subsp. japonica (Rice).